Here is an 870-residue protein sequence, read N- to C-terminus: S-linalool synthase (870 aa).

Mg(2+) is bound by residues aspartate 547, aspartate 551, asparagine 689, serine 693, and glutamate 697. The short motif at 547–551 (DDFFD) is the DDXXD motif element.

It belongs to the terpene synthase family. Mg(2+) serves as cofactor. Requires Mn(2+) as cofactor. As to expression, highly expressed in cells of the transmitting tract of the stigma and style and in the epidermal cells of petals, as well as in stamens.

The catalysed reaction is (2E)-geranyl diphosphate + H2O = (S)-linalool + diphosphate. Involved in the biosynthesis of the acyclic monoterpene S-linalool, a major component of the strong sweet scent of the C.breweri flowers. In Clarkia breweri (Fairy fans), this protein is S-linalool synthase (LIS).